The following is a 103-amino-acid chain: Vesicle-associated membrane protein 3 (103 aa).

A disordered region spans residues 1 to 25 (MSTGVPSGSSAATGSNRRLQQTQNQ). At 1 to 81 (MSTGVPSGSS…KRKYWWKNCK (81 aa)) the chain is on the cytoplasmic side. The 61-residue stretch at 18-78 (RLQQTQNQVD…AKLKRKYWWK (61 aa)) folds into the v-SNARE coiled-coil homology domain. Glycyl lysine isopeptide (Lys-Gly) (interchain with G-Cter in ubiquitin) cross-links involve residues lysine 70, lysine 72, and lysine 81. Residues 82–102 (MWAIGISVLVIIVIIIIVWCV) traverse the membrane as a helical; Anchor for type IV membrane protein segment. Serine 103 is a topological domain (vesicular).

This sequence belongs to the synaptobrevin family. As to quaternary structure, interacts with POPDC1 (via the C-terminus cytoplasmic tail). Interacts with BCAP31; involved in VAMP3 export from the endoplasmic reticulum. Interacts with BAIAP3; this interaction is increased in the presence of calcium. Interacts with PICALM. Ubiquitinated by RNF167 at Lys-70, Lys-72 and Lys-81, regulating the recycling endosome pathway. In terms of processing, (Microbial infection) Targeted and hydrolyzed by C.botulinum neurotoxin type D (BoNT/D, botD) which hydrolyzes the 46-Lys-|-Leu-47 bond and probably inhibits neurotransmitter release. Post-translationally, (Microbial infection) Targeted and hydrolyzed by C.botulinum neurotoxin type F (BoNT/F, botF) which hydrolyzes the 45-Gln-|-Lys-46 bond and probably inhibits neurotransmitter release. (Microbial infection) Targeted and hydrolyzed by C.tetani toxin (tetX) which hydrolyzes the 63-Gln-|-Phe-64 bond and probably inhibits neurotransmitter release. As to expression, ubiquitous.

The protein resides in the early endosome membrane. The protein localises to the recycling endosome membrane. Its subcellular location is the synapse. It is found in the synaptosome. SNARE involved in vesicular transport from the late endosomes to the trans-Golgi network. In Rattus norvegicus (Rat), this protein is Vesicle-associated membrane protein 3 (Vamp3).